The chain runs to 140 residues: uncharacterized protein (140 aa).

A glycan (N-linked (GlcNAc...) asparagine) is linked at N36. A helical membrane pass occupies residues 91–107; the sequence is LFMSLIGLCVCYMNLVF. A compositionally biased stretch (polar residues) spans 113 to 122; sequence QPSSSGSKGN. The disordered stretch occupies residues 113-140; that stretch reads QPSSSGSKGNTETTIETTTEVETETAKQ. Residues 131–140 show a composition bias toward acidic residues; sequence TEVETETAKQ.

Its subcellular location is the endoplasmic reticulum membrane. This is an uncharacterized protein from Saccharomyces cerevisiae (strain ATCC 204508 / S288c) (Baker's yeast).